The chain runs to 65 residues: Large ribosomal subunit protein bL35 (65 aa).

Basic residues-rich tracts occupy residues 1–11 (MPKIKTRRSAA) and 21–43 (KFKR…RKMR). Residues 1–65 (MPKIKTRRSA…KAVRRMLPNG (65 aa)) form a disordered region.

The protein belongs to the bacterial ribosomal protein bL35 family.

The chain is Large ribosomal subunit protein bL35 from Desulfovibrio desulfuricans (strain ATCC 27774 / DSM 6949 / MB).